A 349-amino-acid chain; its full sequence is DNA polymerase IV (349 aa).

A UmuC domain is found at 4 to 185 (IIHIDCDCFY…LPVAKLHGVG (182 aa)). D8 and D103 together coordinate Mg(2+). The active site involves E104.

This sequence belongs to the DNA polymerase type-Y family. In terms of assembly, monomer. It depends on Mg(2+) as a cofactor.

The protein localises to the cytoplasm. The catalysed reaction is DNA(n) + a 2'-deoxyribonucleoside 5'-triphosphate = DNA(n+1) + diphosphate. Poorly processive, error-prone DNA polymerase involved in untargeted mutagenesis. Copies undamaged DNA at stalled replication forks, which arise in vivo from mismatched or misaligned primer ends. These misaligned primers can be extended by PolIV. Exhibits no 3'-5' exonuclease (proofreading) activity. May be involved in translesional synthesis, in conjunction with the beta clamp from PolIII. This is DNA polymerase IV from Pseudomonas aeruginosa (strain UCBPP-PA14).